The sequence spans 379 residues: Mannitol-1-phosphate 5-dehydrogenase (379 aa).

3–14 serves as a coordination point for NAD(+); sequence ALHFGAGNIGRG.

The protein belongs to the mannitol dehydrogenase family.

It catalyses the reaction D-mannitol 1-phosphate + NAD(+) = beta-D-fructose 6-phosphate + NADH + H(+). The protein is Mannitol-1-phosphate 5-dehydrogenase of Actinobacillus pleuropneumoniae serotype 3 (strain JL03).